We begin with the raw amino-acid sequence, 387 residues long: Galactokinase (387 aa).

33–36 provides a ligand contact to substrate; sequence EHTD. Residues Ser67 and 124 to 130 contribute to the ATP site; that span reads GAGLSSS. Mg(2+) is bound by residues Ser130 and Glu162. The active-site Proton acceptor is Asp174. Substrate is bound at residue Tyr224.

The protein belongs to the GHMP kinase family. GalK subfamily.

It is found in the cytoplasm. The catalysed reaction is alpha-D-galactose + ATP = alpha-D-galactose 1-phosphate + ADP + H(+). The protein operates within carbohydrate metabolism; galactose metabolism. Its function is as follows. Catalyzes the transfer of the gamma-phosphate of ATP to D-galactose to form alpha-D-galactose-1-phosphate (Gal-1-P). The chain is Galactokinase from Lactiplantibacillus plantarum (strain ATCC BAA-793 / NCIMB 8826 / WCFS1) (Lactobacillus plantarum).